Reading from the N-terminus, the 35-residue chain is Photosystem II reaction center protein T (35 aa).

Residues 3–23 traverse the membrane as a helical segment; that stretch reads ALVYTFLLVSTLGIIFFAIFF.

Belongs to the PsbT family. PSII is composed of 1 copy each of membrane proteins PsbA, PsbB, PsbC, PsbD, PsbE, PsbF, PsbH, PsbI, PsbJ, PsbK, PsbL, PsbM, PsbT, PsbY, PsbZ, Psb30/Ycf12, at least 3 peripheral proteins of the oxygen-evolving complex and a large number of cofactors. It forms dimeric complexes.

The protein resides in the plastid. The protein localises to the chloroplast thylakoid membrane. Found at the monomer-monomer interface of the photosystem II (PS II) dimer, plays a role in assembly and dimerization of PSII. PSII is a light-driven water plastoquinone oxidoreductase, using light energy to abstract electrons from H(2)O, generating a proton gradient subsequently used for ATP formation. This is Photosystem II reaction center protein T from Nelumbo lutea (American lotus).